Here is an 866-residue protein sequence, read N- to C-terminus: Probable beta-glucosidase F (866 aa).

The first 20 residues, 1–20 (MAAFPAYLALLSYLVPGALS), serve as a signal peptide directing secretion. N-linked (GlcNAc...) asparagine glycosylation is found at N65, N73, and N257. D285 is an active-site residue. N-linked (GlcNAc...) asparagine glycans are attached at residues N328, N360, N395, N421, N474, N659, N664, and N724. A disordered region spans residues 725–748 (SSKTYPYPDGYTTEPKPAPRAGGA).

Belongs to the glycosyl hydrolase 3 family.

Its subcellular location is the secreted. It carries out the reaction Hydrolysis of terminal, non-reducing beta-D-glucosyl residues with release of beta-D-glucose.. It functions in the pathway glycan metabolism; cellulose degradation. Beta-glucosidases are one of a number of cellulolytic enzymes involved in the degradation of cellulosic biomass. Catalyzes the last step releasing glucose from the inhibitory cellobiose. The chain is Probable beta-glucosidase F (bglF) from Aspergillus oryzae (strain ATCC 42149 / RIB 40) (Yellow koji mold).